The chain runs to 436 residues: Xylose isomerase (436 aa).

Catalysis depends on residues H100 and D103. Mg(2+) is bound by residues E231, E267, H270, D295, D306, D308, and D338.

This sequence belongs to the xylose isomerase family. As to quaternary structure, homotetramer. It depends on Mg(2+) as a cofactor.

The protein localises to the cytoplasm. It catalyses the reaction alpha-D-xylose = alpha-D-xylulofuranose. This chain is Xylose isomerase, found in Rhizobium etli (strain CIAT 652).